The chain runs to 448 residues: RuvB-like 2 (448 aa).

Residue 73 to 80 (GEPGAGKT) coordinates ATP.

Belongs to the RuvB family. In terms of assembly, forms homohexameric rings. May form a dodecamer with ruvb-1 made of two stacked hexameric rings. As to expression, expressed in gonadal cells.

Its subcellular location is the cytoplasm. The protein resides in the nucleus. The catalysed reaction is ATP + H2O = ADP + phosphate + H(+). Possesses single-stranded DNA-stimulated ATPase and ATP-dependent DNA helicase (5' to 3') activity suggesting a role in nuclear processes such as recombination and transcription. May participate in several chromatin remodeling complexes that mediate the ATP-dependent exchange of histones and remodel chromatin by shifting nucleosomes. Involvement in these complexes is likely required for transcriptional activation of selected genes and DNA repair in response to DNA damage. Has a role in gonadal development. Involved in the endoplasmic reticulum (ER)-associated degradation (ERAD) pathway where it negatively regulates expression of ER stress response genes. Specifically, negatively controls the expression of ER homeostasis regulator ckb-2 in a cdc-48.1/2-dependent manner. The sequence is that of RuvB-like 2 from Caenorhabditis elegans.